A 101-amino-acid polypeptide reads, in one-letter code: MAKTSMIHRDIKRAKLAKKFAGKRDALKKILSSQDASYEEKIDASTKLQKLPRDSSPSRHRNRCELSGRPRGVYRKFGLGRNMLRKATMNGDVPGLRKASW.

The segment at Ser-33–Arg-69 is disordered. The segment covering Leu-51–Gly-68 has biased composition (basic and acidic residues).

Belongs to the universal ribosomal protein uS14 family. Part of the 30S ribosomal subunit. Contacts proteins S3 and S10.

Its function is as follows. Binds 16S rRNA, required for the assembly of 30S particles and may also be responsible for determining the conformation of the 16S rRNA at the A site. The sequence is that of Small ribosomal subunit protein uS14 from Xanthomonas axonopodis pv. citri (strain 306).